The sequence spans 78 residues: MNRIIFCTFLQKKSEGQDYPPYPGKLGEKIYNQISKIAWKEWKLQQTKLINEEKLNMFNQNDRKKIEKYMKLFLFNNE.

It belongs to the Fe(2+)-trafficking protein family. In terms of assembly, monomer.

Could be a mediator in iron transactions between iron acquisition and iron-requiring processes, such as synthesis and/or repair of Fe-S clusters in biosynthetic enzymes. The protein is Probable Fe(2+)-trafficking protein of Buchnera aphidicola subsp. Schizaphis graminum (strain Sg).